Reading from the N-terminus, the 403-residue chain is Calcium-responsive transactivator (403 aa).

Residues 1-148 (MSVAFASARP…TLPTTTMSMA (148 aa)) are N-terminal auto-inhibitory domain. Positions 50–53 (YQQI) match the SH2-binding motif. Disordered stretches follow at residues 72–111 (QSLL…ALGS), 152–171 (HGSA…VPMQ), 224–303 (NQSS…RTFE), and 318–403 (SQQQ…NYQQ). Composition is skewed to polar residues over residues 92–105 (QTGP…QGNL) and 161–171 (TVPSSQNVPMQ). Residues 149-238 (VSTHGSAPGY…GSSMMGQRPL (90 aa)) are methionine-rich intra-molecular domain. Residues 224 to 235 (NQSSQGSSMMGQ) are compositionally biased toward low complexity. The MFD domain stretch occupies residues 252-324 (YLGQEEYYSE…AQYSQQQTGY (73 aa)). The segment covering 263 to 277 (YGHSQGSSEAMTPQY) has biased composition (polar residues). The segment covering 286–296 (YSYQQSSYGEQ) has biased composition (low complexity). The necessary for nuclear localization stretch occupies residues 341–403 (NQQNYPGQQQ…EQGQYGNYQQ (63 aa)). Positions 360-363 (SQYS) match the SH2-binding motif. The SH3-binding motif lies at 378-386 (TSQTTSTAQ). Positions 398-401 (YGNY) match the SH2-binding motif.

This sequence belongs to the SS18 family. In terms of assembly, homodimer.

Its subcellular location is the nucleus. Transcriptional activator which may be required for calcium-dependent dendritic growth and branching in cortical neurons. The chain is Calcium-responsive transactivator (ss18l1) from Xenopus laevis (African clawed frog).